Here is a 383-residue protein sequence, read N- to C-terminus: S-adenosylmethionine synthase (383 aa).

His-15 provides a ligand contact to ATP. Asp-17 contacts Mg(2+). Glu-43 serves as a coordination point for K(+). Positions 56 and 99 each coordinate L-methionine. A flexible loop region spans residues 99–109 (QSPDINQGVDR). ATP-binding positions include 164-166 (DAK), 230-231 (RF), Asp-239, 245-246 (RK), Ala-262, and Lys-266. An L-methionine-binding site is contributed by Asp-239. Residue Lys-270 participates in L-methionine binding.

The protein belongs to the AdoMet synthase family. Homotetramer; dimer of dimers. Requires Mg(2+) as cofactor. K(+) serves as cofactor.

It is found in the cytoplasm. It carries out the reaction L-methionine + ATP + H2O = S-adenosyl-L-methionine + phosphate + diphosphate. It participates in amino-acid biosynthesis; S-adenosyl-L-methionine biosynthesis; S-adenosyl-L-methionine from L-methionine: step 1/1. Catalyzes the formation of S-adenosylmethionine (AdoMet) from methionine and ATP. The overall synthetic reaction is composed of two sequential steps, AdoMet formation and the subsequent tripolyphosphate hydrolysis which occurs prior to release of AdoMet from the enzyme. The chain is S-adenosylmethionine synthase from Shewanella baltica (strain OS155 / ATCC BAA-1091).